A 257-amino-acid chain; its full sequence is Zinc uptake system ATP-binding protein ZurA (257 aa).

One can recognise an ABC transporter domain in the interval 5 to 241; it reads IEVNNVSYHY…ADRELEILAE (237 aa). 37-44 contributes to the ATP binding site; sequence GPNGSGKS.

Belongs to the ABC transporter superfamily.

In terms of biological role, involved in a zinc uptake transport system. This is Zinc uptake system ATP-binding protein ZurA (zurA) from Listeria monocytogenes serovar 1/2a (strain ATCC BAA-679 / EGD-e).